A 191-amino-acid chain; its full sequence is Molybdenum cofactor guanylyltransferase (191 aa).

GTP contacts are provided by residues 13-15 (LAG), Lys26, Asp72, and Asp102. Asp102 lines the Mg(2+) pocket.

This sequence belongs to the MobA family. Monomer. Mg(2+) serves as cofactor.

Its subcellular location is the cytoplasm. It carries out the reaction Mo-molybdopterin + GTP + H(+) = Mo-molybdopterin guanine dinucleotide + diphosphate. In terms of biological role, transfers a GMP moiety from GTP to Mo-molybdopterin (Mo-MPT) cofactor (Moco or molybdenum cofactor) to form Mo-molybdopterin guanine dinucleotide (Mo-MGD) cofactor. The sequence is that of Molybdenum cofactor guanylyltransferase from Pseudomonas putida (strain GB-1).